Here is a 316-residue protein sequence, read N- to C-terminus: Arabinooligosaccharides transport system permease protein AraP (316 aa).

7 consecutive transmembrane segments (helical) span residues 32–52 (VVPY…SFYP), 94–114 (TYMI…AVLL), 128–148 (ALFL…RLMF), 178–198 (MFLM…LYFL), 224–244 (FYVT…ISVI), 254–274 (FVFW…GYLY), and 283–303 (MGFG…ISIT). One can recognise an ABC transmembrane type-1 domain in the interval 89 to 304 (LQNTTTYMIL…LIIFVISITQ (216 aa)).

The protein belongs to the binding-protein-dependent transport system permease family. MalFG subfamily. In terms of assembly, the complex is composed of two ATP-binding proteins (MsmX), two transmembrane proteins (AraP and AraQ) and a solute-binding protein (AraN).

The protein localises to the cell membrane. In terms of biological role, part of the ABC transporter complex AraNPQ involved in the uptake of arabinooligosaccharides. Responsible for the translocation of the substrate across the membrane. This chain is Arabinooligosaccharides transport system permease protein AraP (araP), found in Halalkalibacterium halodurans (strain ATCC BAA-125 / DSM 18197 / FERM 7344 / JCM 9153 / C-125) (Bacillus halodurans).